Consider the following 366-residue polypeptide: tRNA/tmRNA (uracil-C(5))-methyltransferase (366 aa).

S-adenosyl-L-methionine contacts are provided by glutamine 190, tyrosine 218, asparagine 223, glutamate 239, and aspartate 299. Cysteine 324 (nucleophile) is an active-site residue. Glutamate 358 functions as the Proton acceptor in the catalytic mechanism.

The protein belongs to the class I-like SAM-binding methyltransferase superfamily. RNA M5U methyltransferase family. TrmA subfamily.

It catalyses the reaction uridine(54) in tRNA + S-adenosyl-L-methionine = 5-methyluridine(54) in tRNA + S-adenosyl-L-homocysteine + H(+). It carries out the reaction uridine(341) in tmRNA + S-adenosyl-L-methionine = 5-methyluridine(341) in tmRNA + S-adenosyl-L-homocysteine + H(+). Its function is as follows. Dual-specificity methyltransferase that catalyzes the formation of 5-methyluridine at position 54 (m5U54) in all tRNAs, and that of position 341 (m5U341) in tmRNA (transfer-mRNA). The protein is tRNA/tmRNA (uracil-C(5))-methyltransferase of Escherichia coli O7:K1 (strain IAI39 / ExPEC).